The primary structure comprises 63 residues: DNA-directed RNA polymerase 7 kDa subunit (63 aa).

The protein belongs to the poxviridae DNA-directed RNA polymerase 7 kDa subunit family. In terms of assembly, the DNA-dependent RNA polymerase used for intermediate and late genes expression consists of eight subunits 147 kDa, 133 kDa, 35 kDa, 30 kDa, 22 kDa, 19 kDa, 18 kDa and 7 kDa totalling more than 500 kDa in mass. The same holoenzyme, with the addition of the transcription-specificity factor RAP94, is used for early gene expression.

It is found in the virion. It catalyses the reaction RNA(n) + a ribonucleoside 5'-triphosphate = RNA(n+1) + diphosphate. Its function is as follows. Part of the DNA-dependent RNA polymerase which catalyzes the transcription of viral DNA into RNA using the four ribonucleoside triphosphates as substrates. Responsible for the transcription of early, intermediate and late genes. DNA-dependent RNA polymerase associates with the early transcription factor (ETF) thereby allowing the early genes transcription. Late transcription, and probably also intermediate transcription, require newly synthesized RNA polymerase. In Molluscum contagiosum virus subtype 1 (MOCV), this protein is DNA-directed RNA polymerase 7 kDa subunit (RPO7).